Reading from the N-terminus, the 440-residue chain is Thymidine phosphorylase (440 aa).

Belongs to the thymidine/pyrimidine-nucleoside phosphorylase family. As to quaternary structure, homodimer.

It carries out the reaction thymidine + phosphate = 2-deoxy-alpha-D-ribose 1-phosphate + thymine. Its pathway is pyrimidine metabolism; dTMP biosynthesis via salvage pathway; dTMP from thymine: step 1/2. Functionally, the enzymes which catalyze the reversible phosphorolysis of pyrimidine nucleosides are involved in the degradation of these compounds and in their utilization as carbon and energy sources, or in the rescue of pyrimidine bases for nucleotide synthesis. The protein is Thymidine phosphorylase of Salmonella paratyphi A (strain ATCC 9150 / SARB42).